The sequence spans 273 residues: Putative phosphoenolpyruvate synthase regulatory protein (273 aa).

153 to 160 serves as a coordination point for ADP; the sequence is GVSRSGKT.

The protein belongs to the pyruvate, phosphate/water dikinase regulatory protein family. PSRP subfamily.

It catalyses the reaction [pyruvate, water dikinase] + ADP = [pyruvate, water dikinase]-phosphate + AMP + H(+). The enzyme catalyses [pyruvate, water dikinase]-phosphate + phosphate + H(+) = [pyruvate, water dikinase] + diphosphate. Functionally, bifunctional serine/threonine kinase and phosphorylase involved in the regulation of the phosphoenolpyruvate synthase (PEPS) by catalyzing its phosphorylation/dephosphorylation. This chain is Putative phosphoenolpyruvate synthase regulatory protein, found in Paracidovorax citrulli (strain AAC00-1) (Acidovorax citrulli).